We begin with the raw amino-acid sequence, 226 residues long: Ras-related protein Rab11A (226 aa).

GTP-binding positions include 24-32, 43-49, 72-76, 130-133, and 160-162; these read GDSAVGKSQ, SLDSKST, DTAGQ, NKCD, and SAL. The short motif at 46–54 is the Effector region element; sequence SKSTIGVEF. S-geranylgeranyl cysteine attachment occurs at residues Cys222 and Cys223. Cysteine methyl ester is present on Cys223. Residues 224–226 constitute a propeptide, removed in mature form; that stretch reads QAS.

This sequence belongs to the small GTPase superfamily. Rab family.

The protein resides in the cell membrane. This chain is Ras-related protein Rab11A (RAB11A), found in Lotus japonicus (Lotus corniculatus var. japonicus).